The sequence spans 1687 residues: MGAGSSTEQRSPEQPAGSDTPSELVLSGHGPAAEASGAAGDPADADPATKLPQKNGQLSTVNGVAEQGDVHVQEENQEGQEEEVVDEDVGQRESEDVREKDRVEEMAANSTAVEDITKDGQEETSEIIEQIPASESNVEEMVQPAESQANDVGFKKVFKFVGFKFTVKKDKNEKSDTVQLLTVKKDEGEGAEASVGAGDHQEPSVETAVGESASKESELKQSTEKQEGTLKQEQSSTEIPLQAESDQAAEEEAKDEGEEKQEKEPTKSPESPSSPVSSETTSSFKKFFTHGWAGWRKKTSFKKSKEDDLETAEKRKEQEAEKVDEEEKEKTEPASEEQEPAEDTDQARLSADYEKVELPLEDQVGDLEASSEEKCAPLATEVFDEKMEAHQEVVAEVHVSTVEKTEEEQGGGGEAEGGVVVEGTGESLPPEKLAEPQEVPQEAEPAEELMKSREMCVSGGDHTQLTDLSPEEKTLPKHPEGIVSEVEMLSSQERIKVQGSPLKKLFSSSGLKKLSGKKQKGKRGGGGDEEPGEYQHIHTESPESADEQKGESSASSPEEPEETTCLEKGPLEAPQDGEAEEGTTSDGEKKREGITPWASFKKMVTPKKRVRRPSESDKEEELEKVKSATLSSTDSTVSEMQDEVKTVGEEQKPEEPKRRVDTSVSWEALICVGSSKKRARKASSSDDEGGPRTLGGDSHRAEEASKDKEAGTDAVPASTQEQDQAQGSSSPEPAGSPSEGEGVSTWESFKRLVTPRKKSKSKLEEKAEDSSVEQLSTEIEPSREESWVSIKKFIPGRRKKRADGKQEQATVEDSGPVEINEDDPDVPAVVPLSEYDAVEREKMEAQGNAELPQLLGAVYVSEELSKTLVHTVSVAVIDGTRAVTSVEERSPSWISASVTEPLEHTAGEAMPPVEEVTEKDIIAEETPVLTQTLPEGKDAHDDMVTSEVDFTSEAVTATETSEALRTEEVTEASGAEETTDMVSAVSQLTDSPDTTEEATPVQEVEGGVLDTEEEERQTQAILQAVADKVKEESQVPATQTVQRTGSKALEKVEEVEEDSEVLASEKEKDVMPKGPVQEAGAEHLAQGSETGQATPESLEVPEVTADVDHVATCQVIKLQQLMEQAVAPESSETLTDSETNGSTPLADSDTADGTQQDETIDSQDSKATAAVRQSQVTEEEAATAQKEEPSTLPNNVPAQEEHGEEPGRDVLEPTQQELAAAAVPVLAKTEVGQEGEVDWLDGEKVKEEQEVFVHSGPNSQKAADVTYDSEVMGVAGCQEKESTEVQSLSLEEGEMETDVEKEKRETKPEQVSEEGEQETAAPEHEGTYGKPVLTLDMPSSERGKALGSLGGSPSLPDQDKAGCIEVQVQSLDTTVTQTAEAVEKVIETVVISETGESPECVGAHLLPAEKSSATGGHWTLQHAEDTVPLGPESQAESIPIIVTPAPESTLHPDLQGEISASQRERSEEEDKPDAGPDADGKESTAIEKVLKAEPEILELESKSNKIVLNVIQTAVDQFARTETAPETHAYDSQTQVPAMQADSQGAQQMLDKNESCQDETPSAAAQRGLASPDRSGGMGSASEMLAALAVESAGVKVSIEKLPPQPKDQKEHAADGPQLQSLAQAEASASGNLTKESPDTNGPKLTEEGDAPKVEVQEEEMSTKSVKENKAQAEEDLQEPKGDLAES.

A disordered region spans residues 1-108 (MGAGSSTEQR…EKDRVEEMAA (108 aa)). G2 is lipidated: N-myristoyl glycine. S11, S18, S22, and S27 each carry phosphoserine. Over residues 30-48 (GPAAEASGAAGDPADADPA) the composition is skewed to low complexity. Residues 52 to 62 (PQKNGQLSTVN) show a composition bias toward polar residues. Over residues 75 to 88 (ENQEGQEEEVVDED) the composition is skewed to acidic residues. The segment covering 89–105 (VGQRESEDVREKDRVEE) has biased composition (basic and acidic residues). A phosphoserine mark is found at S136 and S204. Disordered regions lie at residues 175 to 282 (SDTV…ETTS) and 298 to 355 (KTSF…DYEK). Residues 213–230 (ASKESELKQSTEKQEGTL) show a composition bias toward basic and acidic residues. Phosphoserine is present on residues S235 and S245. Residues 247–259 (QAAEEEAKDEGEE) are compositionally biased toward acidic residues. The segment at 254–544 (KDEGEEKQEK…QHIHTESPES (291 aa)) is involved in PKC-binding. A phosphoserine mark is found at S268, S271, S274, and S304. A compositionally biased stretch (low complexity) spans 268 to 282 (SPESPSSPVSSETTS). Over residues 303–321 (KSKEDDLETAEKRKEQEAE) the composition is skewed to basic and acidic residues. The residue at position 331 (T331) is a Phosphothreonine. Acidic residues predominate over residues 334-344 (ASEEQEPAEDT). Phosphoserine is present on residues S335 and S350. Y353 bears the Phosphotyrosine mark. S371 bears the Phosphoserine mark. The segment at 402-481 (VEKTEEEQGG…EKTLPKHPEG (80 aa)) is disordered. Residues 417-426 (GGVVVEGTGE) show a composition bias toward low complexity. At S469 the chain carries Phosphoserine. Residues 470-480 (PEEKTLPKHPE) show a composition bias toward basic and acidic residues. 3 positions are modified to phosphoserine: S491, S507, and S509. The segment at 496–828 (KVQGSPLKKL…INEDDPDVPA (333 aa)) is disordered. Low complexity predominate over residues 499-513 (GSPLKKLFSSSGLKK). Residues 514–523 (LSGKKQKGKR) are compositionally biased toward basic residues. The segment covering 533 to 550 (EYQHIHTESPESADEQKG) has biased composition (basic and acidic residues). Phosphoserine occurs at positions 541, 544, 585, 599, 614, and 616. The AKAP CaM-binding 1 motif lies at 594–614 (ITPWASFKKMVTPKKRVRRPS). Residues 612–626 (RPSESDKEEELEKVK) show a composition bias toward basic and acidic residues. The segment covering 628–639 (ATLSSTDSTVSE) has biased composition (polar residues). T629 is subject to Phosphothreonine. Phosphoserine occurs at positions 631, 632, 635, and 638. A compositionally biased stretch (basic and acidic residues) spans 642–661 (DEVKTVGEEQKPEEPKRRVD). Phosphoserine is present on residues S683, S684, and S685. Residues 697–711 (DSHRAEEASKDKEAG) are compositionally biased toward basic and acidic residues. Polar residues predominate over residues 717-726 (ASTQEQDQAQ). Over residues 727–744 (GSSSPEPAGSPSEGEGVS) the composition is skewed to low complexity. Phosphoserine is present on residues S736, S748, S770, S771, and S789. The short motif at 743–763 (VSTWESFKRLVTPRKKSKSKL) is the AKAP CaM-binding 2 element. Residues 784–804 (EESWVSIKKFIPGRRKKRADG) carry the AKAP CaM-binding 3 motif. The residue at position 871 (T871) is a Phosphothreonine. S873 carries the post-translational modification Phosphoserine. Residues 959–981 (ETSEALRTEEVTEASGAEETTDM) form a disordered region. A Glycyl lysine isopeptide (Lys-Gly) (interchain with G-Cter in SUMO1) cross-link involves residue K1030. Over residues 1035-1045 (VPATQTVQRTG) the composition is skewed to polar residues. Disordered stretches follow at residues 1035–1105 (VPAT…EVTA), 1125–1221 (AVAP…LAAA), 1277–1361 (CQEK…QDKA), and 1443–1487 (TPAP…TAIE). S1059 carries the post-translational modification Phosphoserine. The segment covering 1130–1157 (SSETLTDSETNGSTPLADSDTADGTQQD) has biased composition (polar residues). The span at 1199-1211 (QEEHGEEPGRDVL) shows a compositional bias: basic and acidic residues. S1289 bears the Phosphoserine mark. Residues 1298–1310 (DVEKEKRETKPEQ) show a composition bias toward basic and acidic residues. 3 positions are modified to phosphoserine: S1348, S1352, and S1354. Basic and acidic residues predominate over residues 1462–1487 (QRERSEEEDKPDAGPDADGKESTAIE). An RII-binding region spans residues 1498–1511 (ELESKSNKIVLNVI). 2 disordered regions span residues 1522-1582 (ETAP…GSAS) and 1599-1687 (IEKL…LAES). Residues 1530-1547 (YDSQTQVPAMQADSQGAQ) show a composition bias toward polar residues. 2 positions are modified to phosphoserine: S1543 and S1571. Low complexity predominate over residues 1618–1630 (QLQSLAQAEASAS). Phosphoserine is present on S1637. Positions 1645–1687 (LTEEGDAPKVEVQEEEMSTKSVKENKAQAEEDLQEPKGDLAES) are enriched in basic and acidic residues.

As to quaternary structure, binds to dimeric RII-alpha regulatory subunit of PKC. Phosphorylated by PKC (in vitro).

The protein resides in the cytoplasm. It is found in the cytoskeleton. Its subcellular location is the membrane. Functionally, anchoring protein that mediates the subcellular compartmentation of protein kinase A (PKA) and protein kinase C (PKC). The polypeptide is A-kinase anchor protein 12 (Akap12) (Rattus norvegicus (Rat)).